Reading from the N-terminus, the 310-residue chain is Malate dehydrogenase (310 aa).

NAD(+) is bound by residues 7–12 (GAGNVG) and aspartate 32. Substrate is bound by residues arginine 81 and arginine 87. NAD(+)-binding positions include asparagine 94 and 117–119 (VSN). 2 residues coordinate substrate: asparagine 119 and arginine 150. Histidine 174 serves as the catalytic Proton acceptor.

This sequence belongs to the LDH/MDH superfamily. MDH type 3 family.

The enzyme catalyses (S)-malate + NAD(+) = oxaloacetate + NADH + H(+). Catalyzes the reversible oxidation of malate to oxaloacetate. The polypeptide is Malate dehydrogenase (Chlorobium chlorochromatii (strain CaD3)).